Consider the following 255-residue polypeptide: NAP1-related protein 2 (255 aa).

The stretch at 19-60 (IDAELVLSIEKLQEIQDDLEKINEKASDEVLEVEQKYNVIRK) forms a coiled coil. The interval 213–255 (NPLTYFNNDADEEDFDGDDDGDEEEKEGDSDEDDDEEDEVGEE) is disordered. Residues 221-255 (DADEEDFDGDDDGDEEEKEGDSDEDDDEEDEVGEE) are compositionally biased toward acidic residues.

Belongs to the nucleosome assembly protein (NAP) family. In terms of assembly, can form homomeric and heteromeric protein complexes with NRP1. Binds histones H2A and H2B and associates with chromatin in vivo. As to expression, ubiquitous.

It is found in the cytoplasm. The protein resides in the nucleus. Acts as a histone H2A/H2B chaperone in nucleosome assembly, playing a critical role for the correct expression of genes involved in root proliferation and patterning. Required with NRP1 for the maintenance of cell proliferation and differentiation in postembryonic root growth. Involved in both intramolecular and intermolecular somatic homologous recombination. The polypeptide is NAP1-related protein 2 (NRP2) (Arabidopsis thaliana (Mouse-ear cress)).